Here is a 218-residue protein sequence, read N- to C-terminus: Large ribosomal subunit protein uL3 (218 aa).

Residues 137–157 form a disordered region; that stretch reads GVGASHGAHKNHRKPGSIGGA.

Belongs to the universal ribosomal protein uL3 family. Part of the 50S ribosomal subunit. Forms a cluster with proteins L14 and L19.

Functionally, one of the primary rRNA binding proteins, it binds directly near the 3'-end of the 23S rRNA, where it nucleates assembly of the 50S subunit. The protein is Large ribosomal subunit protein uL3 of Kocuria rhizophila (strain ATCC 9341 / DSM 348 / NBRC 103217 / DC2201).